The following is a 431-amino-acid chain: Indole diterpene prenyltransferase nodD1 (431 aa).

Position 85 to 86 (85 to 86 (FI)) interacts with L-tryptophan. Substrate-binding residues include arginine 107, lysine 194, arginine 268, lysine 270, tyrosine 272, and tyrosine 353.

Belongs to the tryptophan dimethylallyltransferase family.

Its pathway is secondary metabolite biosynthesis. In terms of biological role, indole diterpene prenyltransferase; part of the gene cluster that mediates the biosynthesis of the indole diterpenes nodulisporic acids (NA). Nodulisporic acid A (NAA) and its chemically modified derivatives are of particular significance because of their highly potent insecticidal activity against blood-feeding arthropods and lack of observable adverse effects on mammals, in particular the tremogenicity associated with the paspaline-derived IDTs is not observed. The geranylgeranyl diphosphate (GGPP) synthase ggs1, localized outside of the cluster, is proposed to catalyze the first step in nodulisporic acid biosynthesis via conversion of farnesyl pyrophosphate and isopentyl pyrophosphate into geranylgeranyl pyrophosphate (GGPP). Condensation of indole-3-glycerol phosphate with GGPP by the prenyl transferase nodC then forms 3-geranylgeranylindole (3-GGI). Epoxidation by the FAD-dependent monooxygenase nodM leads to a single-epoxidized-GGI that is substrate of the terpene cyclase nodB for cyclization to yield emindole SB. The terminal methyl carbon, C28, of emindole SB is then oxidized by the cytochrome P450 monooxygenase nodW to produce nodulisporic acid F (NAF), the pentacyclic core of NAA. NAF is converted to nodulisporic acid E (NAE) via prenylation. This step is probably performed by one of the indole diterpene prenyltransferases nodD1 or nodD2. Several oxidation steps performed by the FAD-linked oxidoreductase nodO and one of the cytochrome P450 monooxygenase nodR, nodX or nodZ further convert NAE to nodulisporic acid D (NAD). NAD is substrate of cytochrome P450 monooxygenase nodJ to produce the precursor of nodulisporic acid C (NAC), converted to NAC by one of the indole diterpene prenyltransferases nodD1 or nodD2. The FAD-dependent monooxygenase nodY2 then oxidizes NAC to nodulisporic acid B (NAB). Finally NAB is converted to NAA by one of the cytochrome P450 monooxygenases nodR, nodX or nodZ. The protein is Indole diterpene prenyltransferase nodD1 of Hypoxylon pulicicidum.